A 349-amino-acid chain; its full sequence is Isopentenyl-diphosphate delta-isomerase (349 aa).

5-6 (RK) serves as a coordination point for substrate. Residues serine 61, 62 to 64 (SMT), serine 92, and asparagine 120 contribute to the FMN site. 92-94 (SMR) contributes to the substrate binding site. A substrate-binding site is contributed by glutamine 159. Glutamate 160 lines the Mg(2+) pocket. FMN is bound by residues lysine 189, threonine 219, 269-271 (GLR), and 290-291 (AR).

Belongs to the IPP isomerase type 2 family. In terms of assembly, homooctamer. Dimer of tetramers. FMN is required as a cofactor. It depends on NADPH as a cofactor. Mg(2+) serves as cofactor.

The protein localises to the cytoplasm. The enzyme catalyses isopentenyl diphosphate = dimethylallyl diphosphate. In terms of biological role, involved in the biosynthesis of isoprenoids. Catalyzes the 1,3-allylic rearrangement of the homoallylic substrate isopentenyl (IPP) to its allylic isomer, dimethylallyl diphosphate (DMAPP). The sequence is that of Isopentenyl-diphosphate delta-isomerase from Picrophilus torridus (strain ATCC 700027 / DSM 9790 / JCM 10055 / NBRC 100828 / KAW 2/3).